A 242-amino-acid chain; its full sequence is Ribose-5-phosphate isomerase A (242 aa).

Substrate-binding positions include 39 to 42, 95 to 98, and 108 to 111; these read SGST, DGAD, and KGGG. Residue E117 is the Proton acceptor of the active site. K135 is a binding site for substrate.

It belongs to the ribose 5-phosphate isomerase family. As to quaternary structure, homodimer.

The catalysed reaction is aldehydo-D-ribose 5-phosphate = D-ribulose 5-phosphate. It participates in carbohydrate degradation; pentose phosphate pathway; D-ribose 5-phosphate from D-ribulose 5-phosphate (non-oxidative stage): step 1/1. Catalyzes the reversible conversion of ribose-5-phosphate to ribulose 5-phosphate. This is Ribose-5-phosphate isomerase A from Chlamydia trachomatis serovar L2 (strain ATCC VR-902B / DSM 19102 / 434/Bu).